We begin with the raw amino-acid sequence, 38 residues long: Large ribosomal subunit protein bL36 (38 aa).

This sequence belongs to the bacterial ribosomal protein bL36 family.

This Myxococcus xanthus (strain DK1622) protein is Large ribosomal subunit protein bL36.